Consider the following 49-residue polypeptide: Large ribosomal subunit protein bL33B (49 aa).

The protein belongs to the bacterial ribosomal protein bL33 family.

This Lactobacillus delbrueckii subsp. bulgaricus (strain ATCC BAA-365 / Lb-18) protein is Large ribosomal subunit protein bL33B.